A 214-amino-acid chain; its full sequence is Uridine kinase (214 aa).

15–22 (GASASGKS) is an ATP binding site.

It belongs to the uridine kinase family.

It is found in the cytoplasm. It catalyses the reaction uridine + ATP = UMP + ADP + H(+). It carries out the reaction cytidine + ATP = CMP + ADP + H(+). The protein operates within pyrimidine metabolism; CTP biosynthesis via salvage pathway; CTP from cytidine: step 1/3. Its pathway is pyrimidine metabolism; UMP biosynthesis via salvage pathway; UMP from uridine: step 1/1. In Tolumonas auensis (strain DSM 9187 / NBRC 110442 / TA 4), this protein is Uridine kinase.